Consider the following 160-residue polypeptide: Lipoprotein signal peptidase (160 aa).

2 helical membrane-spanning segments follow: residues 60–80 and 84–104; these read IEWLIAASVLGVILAMTAFFI and LPFLDTRPGLIALGVILAGTV. Catalysis depends on residues Asp-118 and Asp-132. A helical transmembrane segment spans residues 128–148; it reads FNIADSCLTVGVIGLLLLYIV.

The protein belongs to the peptidase A8 family.

Its subcellular location is the cell membrane. The catalysed reaction is Release of signal peptides from bacterial membrane prolipoproteins. Hydrolyzes -Xaa-Yaa-Zaa-|-(S,diacylglyceryl)Cys-, in which Xaa is hydrophobic (preferably Leu), and Yaa (Ala or Ser) and Zaa (Gly or Ala) have small, neutral side chains.. Its pathway is protein modification; lipoprotein biosynthesis (signal peptide cleavage). Its function is as follows. This protein specifically catalyzes the removal of signal peptides from prolipoproteins. The chain is Lipoprotein signal peptidase from Dehalococcoides mccartyi (strain CBDB1).